Consider the following 510-residue polypeptide: 2,3-bisphosphoglycerate-independent phosphoglycerate mutase (510 aa).

Mn(2+) is bound by residues Asp12 and Ser62. Catalysis depends on Ser62, which acts as the Phosphoserine intermediate. Residues His123, 153-154 (RD), Arg185, Arg191, 260-263 (RPDR), and Lys335 each bind substrate. Residues Asp402, His406, Asp443, His444, and His461 each coordinate Mn(2+).

This sequence belongs to the BPG-independent phosphoglycerate mutase family. As to quaternary structure, monomer. The cofactor is Mn(2+).

The enzyme catalyses (2R)-2-phosphoglycerate = (2R)-3-phosphoglycerate. Its pathway is carbohydrate degradation; glycolysis; pyruvate from D-glyceraldehyde 3-phosphate: step 3/5. Catalyzes the interconversion of 2-phosphoglycerate and 3-phosphoglycerate. The protein is 2,3-bisphosphoglycerate-independent phosphoglycerate mutase of Listeria innocua serovar 6a (strain ATCC BAA-680 / CLIP 11262).